We begin with the raw amino-acid sequence, 535 residues long: Bifunctional purine biosynthesis protein PurH (535 aa).

Positions 1-145 (MAQTALISVS…KNWKDVGVLT (145 aa)) constitute an MGS-like domain.

It belongs to the PurH family.

It carries out the reaction (6R)-10-formyltetrahydrofolate + 5-amino-1-(5-phospho-beta-D-ribosyl)imidazole-4-carboxamide = 5-formamido-1-(5-phospho-D-ribosyl)imidazole-4-carboxamide + (6S)-5,6,7,8-tetrahydrofolate. The enzyme catalyses IMP + H2O = 5-formamido-1-(5-phospho-D-ribosyl)imidazole-4-carboxamide. It functions in the pathway purine metabolism; IMP biosynthesis via de novo pathway; 5-formamido-1-(5-phospho-D-ribosyl)imidazole-4-carboxamide from 5-amino-1-(5-phospho-D-ribosyl)imidazole-4-carboxamide (10-formyl THF route): step 1/1. Its pathway is purine metabolism; IMP biosynthesis via de novo pathway; IMP from 5-formamido-1-(5-phospho-D-ribosyl)imidazole-4-carboxamide: step 1/1. The sequence is that of Bifunctional purine biosynthesis protein PurH from Variovorax paradoxus (strain S110).